The following is a 417-amino-acid chain: Probable diacetyl reductase [(R)-acetoin forming] 2 (417 aa).

Zn(2+) is bound at residue Cys39. A Phosphoserine modification is found at Ser63. Residues His64, Cys120, Cys123, Cys131, and Gln173 each coordinate Zn(2+). The segment at 380-417 (GELNREADNEKKEISELSSRKDQERLRESINEAKLRHT) is disordered. The segment covering 381–417 (ELNREADNEKKEISELSSRKDQERLRESINEAKLRHT) has biased composition (basic and acidic residues).

This sequence belongs to the zinc-containing alcohol dehydrogenase family. Zn(2+) serves as cofactor.

It localises to the cytoplasm. It is found in the nucleus. The catalysed reaction is (R)-acetoin + NAD(+) = diacetyl + NADH + H(+). Catalyzes the irreversible reduction of 2,3-butanediol to (S)-acetoin in the presence of NADH. The polypeptide is Probable diacetyl reductase [(R)-acetoin forming] 2 (BDH2) (Saccharomyces cerevisiae (strain ATCC 204508 / S288c) (Baker's yeast)).